Consider the following 123-residue polypeptide: Small ribosomal subunit protein uS12 (123 aa).

The segment at 1–21 (MPTIEQLVRKGRQAKPKKSKT) is disordered. Over residues 9–20 (RKGRQAKPKKSK) the composition is skewed to basic residues. Aspartate 89 carries the post-translational modification 3-methylthioaspartic acid.

This sequence belongs to the universal ribosomal protein uS12 family. Part of the 30S ribosomal subunit. Contacts proteins S8 and S17. May interact with IF1 in the 30S initiation complex.

In terms of biological role, with S4 and S5 plays an important role in translational accuracy. Interacts with and stabilizes bases of the 16S rRNA that are involved in tRNA selection in the A site and with the mRNA backbone. Located at the interface of the 30S and 50S subunits, it traverses the body of the 30S subunit contacting proteins on the other side and probably holding the rRNA structure together. The combined cluster of proteins S8, S12 and S17 appears to hold together the shoulder and platform of the 30S subunit. The sequence is that of Small ribosomal subunit protein uS12 from Bifidobacterium longum subsp. infantis (strain ATCC 15697 / DSM 20088 / JCM 1222 / NCTC 11817 / S12).